A 904-amino-acid polypeptide reads, in one-letter code: Toll-like receptor 3 (904 aa).

An N-terminal signal peptide occupies residues 1-26 (MSRPLPYHIYFFTGLLTCWILCTSSA). Residues 27-52 (HKCTVRHEVADCSHLKLTQIPEDLPT) enclose the LRRNT domain. Residues 27-705 (HKCTVRHEVA…PCKDSAPFEL (679 aa)) lie on the Lumenal side of the membrane. The cysteines at positions 29 and 38 are disulfide-linked. N-linked (GlcNAc...) asparagine glycosylation is found at Asn53, Asn58, and Asn71. LRR repeat units lie at residues 53 to 74 (NITV…NFTR), 77 to 98 (RLTI…LCQN), 101 to 122 (WLEI…TFVF), 125 to 146 (NLTE…PFKN), 149 to 170 (NLIK…TQLQ), and 173 to 196 (NLQE…DFLG). A disulfide bridge links Cys96 with Cys123. Asn125 is a glycosylation site (N-linked (GlcNAc...) asparagine). Residue Asn197 is glycosylated (N-linked (GlcNAc...) asparagine). LRR repeat units lie at residues 199-220 (SLER…CFHA) and 223-245 (KLSG…LCLE). Residues Asn248, Asn253, Asn276, and Asn292 are each glycosylated (N-linked (GlcNAc...) asparagine). LRR repeat units follow at residues 250–271 (SIEN…TFSG), 276–297 (NLTT…SFAW), 300–321 (HLEY…SFYG), 324–345 (NLRH…TSLP), 357–378 (CLEY…TFTG), 381–401 (RLKF…TNET), 409–430 (PLLL…AFSW), 433–455 (HLEV…EWRG), 466–487 (YNKY…QRLM), 508–529 (NLVI…LLKG), 532–553 (KLEI…ANPG), 564–585 (HLRI…AFKD), 588–609 (ELKS…VFDN), and 612–633 (SLKS…VFGP). N-linked (GlcNAc...) asparagine glycans are attached at residues Asn399 and Asn414. N-linked (GlcNAc...) asparagine glycans are attached at residues Asn637, Asn663, and Asn668. Residues 646-699 (NPFDCTCESIAWFVNWINSTHTNISELSNHYLCNTPPQYHGFPVMLFDVSPCKD) form the LRRCT domain. Disulfide bonds link Cys650–Cys678 and Cys652–Cys697. The helical transmembrane segment at 706–726 (LFMINTNILLIFIFIVLLIHF) threads the bilayer. The Cytoplasmic segment spans residues 727 to 904 (EGWRISFYWN…VALGSRNSAH (178 aa)). The TIR domain maps to 754-897 (FEYAAYIIHA…AFHHKLKVAL (144 aa)). Tyr759 carries the post-translational modification Phosphotyrosine. Glycyl lysine isopeptide (Lys-Gly) (interchain with G-Cter in ubiquitin) cross-links involve residues Lys812 and Lys831. Tyr858 is modified (phosphotyrosine).

This sequence belongs to the Toll-like receptor family. As to quaternary structure, monomer and homodimer; dimerization is triggered by ligand-binding and is required for TLR3 signaling. Interacts (via transmembrane domain) with UNC93B1. Interacts with TICAM1 (via the TIR domain) in response to poly(I:C) and this interaction is enhanced the presence of WDFY1. Interacts with SRC; upon binding of double-stranded RNA. The tyrosine-phosphorylated form (via TIR domain) interacts with WDFY1 (via WD repeat 2) in response to poly(I:C). Post-translationally, ubiquitinated by TRIM3; leading to recognition and sorting of polyubiquitinated TLR3 by the ESCRT complexes. Ubiquitinated by ZNRF1 via 'Lys-63'-linked ubiquitin chains; leading to TLR3 lysosomal trafficking and degradation.

It localises to the endoplasmic reticulum membrane. It is found in the endosome membrane. Its subcellular location is the early endosome. Its function is as follows. Key component of innate and adaptive immunity. TLRs (Toll-like receptors) control host immune response against pathogens through recognition of molecular patterns specific to microorganisms. TLR3 is a nucleotide-sensing TLR which is activated by double-stranded RNA, a sign of viral infection. Acts via the adapter TRIF/TICAM1, leading to NF-kappa-B activation, cytokine secretion and the inflammatory response. This Boselaphus tragocamelus (Nilgai) protein is Toll-like receptor 3 (TLR3).